The primary structure comprises 51 residues: Insulin (51 aa).

Disulfide bonds link Cys7-Cys37, Cys19-Cys50, and Cys36-Cys41.

Belongs to the insulin family. As to quaternary structure, heterodimer of a B chain and an A chain linked by two disulfide bonds.

The protein resides in the secreted. Its function is as follows. Insulin decreases blood glucose concentration. It increases cell permeability to monosaccharides, amino acids and fatty acids. It accelerates glycolysis, the pentose phosphate cycle, and glycogen synthesis in liver. This Balaenoptera physalus (Fin whale) protein is Insulin (INS).